Reading from the N-terminus, the 434-residue chain is MECLRYLPRLLPRAAQSRSALCMAAVRLSLAACCGRATPLTSGSQKAPSTPRTAGDVYRFRTSDASQATLASVAQVFAVTKFDKEGNVTSFERKKTELYHELALQARDLRFQHVMSITTRNNRIIMRMEYLKAVITPEYLLILDYRNLNLEHWLFRELPSQLAGEGQLVTYPLPFEFRAIEALLQYWINTLQGKLSILQPLILETLDALVDPKHSSVDRSKLHVLLQNGKSLSELETDIKIFKESILELLDEEEMLEELCLTKWSDPHVFEQSSTGIDHAEEMELLLENYYRLADDLSNEARELRVLIDDSQSIIFINLDSHRNVMMRLNLQLTMGTFSLSLFGLMGVAFGMNLESSLEEDHRVFWLITGIMFMGSGLIWRRLLSFLGRQLEAPLPPVMASLPKKTLLADRRMDVKNSLRPEGLGAGRTILASR.

The N-terminal 28 residues, 1 to 28 (MECLRYLPRLLPRAAQSRSALCMAAVRL), are a transit peptide targeting the mitochondrion. At 54–330 (AGDVYRFRTS…SHRNVMMRLN (277 aa)) the chain is on the mitochondrial matrix side. Mg(2+) contacts are provided by glutamate 234, threonine 237, aspartate 238, glutamate 303, and aspartate 320. Residues 331 to 350 (LQLTMGTFSLSLFGLMGVAF) form a helical membrane-spanning segment. Mg(2+)-binding residues include glycine 351 and asparagine 353. Residues 351-353 (GMN) carry the GMN motif motif. Residues 351–361 (GMNLESSLEED) are Mitochondrial intermembrane-facing. The chain crosses the membrane as a helical span at residues 362 to 392 (HRVFWLITGIMFMGSGLIWRRLLSFLGRQLE). The Mitochondrial matrix portion of the chain corresponds to 393-434 (APLPPVMASLPKKTLLADRRMDVKNSLRPEGLGAGRTILASR).

Belongs to the CorA metal ion transporter (MIT) (TC 1.A.35) family. Homopentamer.

Its subcellular location is the mitochondrion inner membrane. With respect to regulation, may be regulated by calcium ions. Its function is as follows. Magnesium transporter that mediates the influx of magnesium into the mitochondrial matrix and regulates magnesium metabolism. Also permeable to calcium, sodium and potassium ions. Required for normal expression of the mitochondrial respiratory complex I subunits. May play a role in maintaining the inner mitochondrial membrane potential. This is Magnesium transporter MRS2 homolog, mitochondrial (Mrs2) from Rattus norvegicus (Rat).